An 840-amino-acid polypeptide reads, in one-letter code: Radial spoke head 10 homolog B (840 aa).

Basic and acidic residues-rich tracts occupy residues 1–16 and 51–63; these read MVKEKKKADKKGDKSA and QPKDPGVKREVKS. The interval 1–74 is disordered; sequence MVKEKKKADK…SLPNEDTTQY (74 aa). 10 MORN repeats span residues 86 to 108, 109 to 131, 132 to 154, 155 to 177, 179 to 201, 204 to 226, 227 to 249, 251 to 273, 284 to 306, and 307 to 329; these read SYEGEKVRGLYEGEGFAIFQGGC, TYQGMFSEGLMHGQGTYIWADGL, KYEGDFVKNIPMNHGIFTWPDGS, TYEGEVVGGMRHGFGMFKCSTQP, SYIGHWCHGKRHGKGSIYYNQEG, WYEGDWIHNIRKGWGIRCYKSGN, IYEGQWENNVRHGEGRMRWLTTN, EYTGQWKHGVQNGLGTHTWFLKR, EYVGEFVNGYRHGHGKFYYASGA, and MYEGEWVSNKKHGMGRLTFKNGR. The stretch at 758–801 forms a coiled coil; that stretch reads KEKVKENRLHNEAMALQRKMENEELEARLNSLREEEAKRQDYEV. The tract at residues 810–840 is disordered; the sequence is VDAPSSSFTPSPPKEDTVVSSKSITSKKKKK.

In terms of assembly, interacts with RSPH6A. Does not appear to be part of the axonemal radial spoke complexes 1 or 2.

It localises to the cytoplasm. The protein localises to the cytoskeleton. Its subcellular location is the cilium axoneme. It is found in the cell projection. The protein resides in the cilium. It localises to the flagellum. Its function is as follows. May function as part of the axonemal radial spoke complex 3 (RS3). Radial spoke complexes are important for ciliary motility. The polypeptide is Radial spoke head 10 homolog B (RSPH10B) (Bos taurus (Bovine)).